Here is a 368-residue protein sequence, read N- to C-terminus: Glutamate 5-kinase (368 aa).

Lysine 9 is an ATP binding site. Positions 49, 136, and 148 each coordinate substrate. Residues 168–169 and 210–216 each bind ATP; these read TD and TGGMMTK. In terms of domain architecture, PUA spans 275-353; the sequence is AGIITIDNGA…ADIENVLGYE (79 aa).

This sequence belongs to the glutamate 5-kinase family.

Its subcellular location is the cytoplasm. The enzyme catalyses L-glutamate + ATP = L-glutamyl 5-phosphate + ADP. The protein operates within amino-acid biosynthesis; L-proline biosynthesis; L-glutamate 5-semialdehyde from L-glutamate: step 1/2. In terms of biological role, catalyzes the transfer of a phosphate group to glutamate to form L-glutamate 5-phosphate. The sequence is that of Glutamate 5-kinase from Haemophilus influenzae (strain PittGG).